The chain runs to 211 residues: LexA repressor (211 aa).

Positions 27–47 (QTEIARAFGFKGVRAVQHHLD) form a DNA-binding region, H-T-H motif. Active-site for autocatalytic cleavage activity residues include S131 and K168.

Belongs to the peptidase S24 family. In terms of assembly, homodimer.

It catalyses the reaction Hydrolysis of Ala-|-Gly bond in repressor LexA.. Functionally, represses a number of genes involved in the response to DNA damage (SOS response), including recA and lexA. In the presence of single-stranded DNA, RecA interacts with LexA causing an autocatalytic cleavage which disrupts the DNA-binding part of LexA, leading to derepression of the SOS regulon and eventually DNA repair. This chain is LexA repressor, found in Xylella fastidiosa (strain 9a5c).